The chain runs to 396 residues: Cellular tumor antigen p53 (396 aa).

The transcription activation (acidic) stretch occupies residues 1-44; sequence MADLAENVSLPLSQESFEDLWKMNLNLVAVQPPETESWVGYDNF. Residues 63–89 form a disordered region; it reads ATEPAPQPSISTLDTGSPPTSTVPTTS. Residues 77–89 show a composition bias toward low complexity; the sequence is TGSPPTSTVPTTS. A DNA-binding region spans residues 90-281; sequence DYPGALGFQL…KTEEINLKKQ (192 aa). Zn(2+) contacts are provided by Cys-164, His-167, Cys-227, and Cys-231. The interaction with DNA stretch occupies residues 262 to 269; it reads RVCACPGR. Residues 297–317 carry the Bipartite nuclear localization signal motif; sequence KRAMKEASLPAPQPGASKKTK. The segment at 301–322 is disordered; the sequence is KEASLPAPQPGASKKTKSSPAV. The tract at residues 325-356 is oligomerization; the sequence is DEIYTLQIRGKEKYEMLKKFNDSLELSELVPV. The short motif at 339-350 is the Nuclear export signal element; that stretch reads EMLKKFNDSLEL. The tract at residues 369–392 is basic (repression of DNA-binding); sequence KRVAKRDFGVGPKKRKKLLVKEEK.

The protein belongs to the p53 family. Binds DNA as a homotetramer. Requires Zn(2+) as cofactor.

The protein localises to the cytoplasm. It localises to the nucleus. In terms of biological role, multifunctional transcription factor that induces cell cycle arrest, DNA repair or apoptosis upon binding to its target DNA sequence. Acts as a tumor suppressor in many tumor types; induces growth arrest or apoptosis depending on the physiological circumstances and cell type. Negatively regulates cell division by controlling expression of a set of genes required for this process. One of the activated genes is an inhibitor of cyclin-dependent kinases. Apoptosis induction seems to be mediated either by stimulation of BAX and FAS antigen expression, or by repression of Bcl-2 expression. This chain is Cellular tumor antigen p53 (tp53), found in Oncorhynchus mykiss (Rainbow trout).